The following is a 213-amino-acid chain: MLYRLSEKQQTDLRCNKLTVDGFELVKMLKELRLHNRNINFLEFLRGVQIVPSDSVFLGEIDENSHTQDNTTTSILKEKELYDGIPLLPSMAGVSMDPEREKKSELRLMKNQISAIINILFTVVGTVTAVWYCTSSLSIEKKIALCAFSAILVLVADTFLYVRYLSAQPVRTSKNHTRQIIYTWTTNDPVLQSNEQLAIELGAIPSLKEKKNQ.

2 consecutive transmembrane segments (helical) span residues 113–133 (ISAI…VWYC) and 142–162 (KIAL…FLYV).

It is found in the endoplasmic reticulum membrane. In terms of biological role, required for vacuolar ATPase assembly. This is Vacuolar ATPase assembly integral membrane protein vph2 (vph2) from Schizosaccharomyces pombe (strain 972 / ATCC 24843) (Fission yeast).